The sequence spans 1293 residues: Enterobactin synthase component F (1293 aa).

The elongation/condensation stretch occupies residues 1–301 (MSQHLPLVAA…NVLPLGIHIA (301 aa)). An adenylation region spans residues 482–887 (SYREMREQVV…ALPDVEQAVT (406 aa)). Positions 971 to 1046 (APKAGSETII…KLATIIDGEE (76 aa)) constitute a Carrier domain. S1006 carries the O-(pantetheine 4'-phosphoryl)serine modification. The thioesterase stretch occupies residues 1066-1293 (PTLFCFHPAS…GPIIRATLNR (228 aa)). The Proton acceptor; for thioesterase activity role is filled by H1271.

It belongs to the ATP-dependent AMP-binding enzyme family. EntF subfamily. In terms of assembly, proteins EntB, EntD, EntE and EntF are the component of the enterobactin synthase. Components probably do not form a stable complex. EntF acts as a catalytic monomer. The cofactor is pantetheine 4'-phosphate. 4'-phosphopantetheine is transferred from CoA to a specific serine of apo-EntF by EntD. Holo-EntF so formed is then acylated with seryl-AMP.

It localises to the cytoplasm. The catalysed reaction is 3 2,3-dihydroxybenzoate + 3 L-serine + 6 ATP = enterobactin + 6 AMP + 6 diphosphate + 4 H(+). It carries out the reaction holo-[peptidyl-carrier protein] + L-serine + ATP = L-seryl-[peptidyl-carrier protein] + AMP + diphosphate. It participates in siderophore biosynthesis; enterobactin biosynthesis. Its function is as follows. Involved in the biosynthesis of the siderophore enterobactin (enterochelin), which is a macrocyclic trimeric lactone of N-(2,3-dihydroxybenzoyl)-serine. EntF catalyzes the activation of L-serine via ATP-dependent PPi exchange reaction to form seryladenylate. Activated L-serine is loaded onto the peptidyl carrier domain via a thioester linkage to the phosphopanthetheine moiety, forming seryl-S-Ppant-EntF. EntF acts then as the sole catalyst for the formation of the three amide and three ester linkages found in enterobactin, using seryladenylate and 2,3-dihydroxybenzoate-S-Ppant-EntB (DHB-S-Ppant-EntB) as substrates, via the formation of a DHB-Ser-S-Ppant-EntF intermediate. The sequence is that of Enterobactin synthase component F (entF) from Escherichia coli O157:H7.